The following is a 465-amino-acid chain: MGFMRKADFELYRDADKHYNQVLTTRDFLALGVGTIISTSIFTLPGQVAAQFAGPGVVFSYLLAALVAGFVALAYAEMSTVMPFAGSAYSWISVLFGEGFGWIAGWALLAEYFIAVAFVGSGFSANLQQLLAPLGFQLPKVLANPFGTDGGIVDIISLLVILLSAIIVFRGASDAGRISQILVVLKVAAVIAFIIVGITVIKPANYHPFIPPHNPKTGFGGFSGIWSGVSMIFLAYIGFDSIAANSAEAKNPQKTMPRGIIGSLLIAVVLFAAVTLVLVGMHPYSAYAGNAAPVGWALQQSGYSVLSEVVTAIALAGMFIALLGMVLAGSRLLYAFGRDGLLPKGLGKMNARNLPANGVWTLAIVAIVIGAFFPFAFLAQLISAGTLIAFMFVTLGIYSLRRRQGKDLPEATYKMPFYPVLPALGFIGSLFVFWGLDVQAKLYSGIWFLIGIAIYFAYGNRRKKK.

Transmembrane regions (helical) follow at residues 28 to 48 (FLAL…PGQV), 56 to 76 (GVVF…LAYA), 88 to 110 (AYSW…ALLA), 149 to 169 (DGGI…IIVF), 181 to 201 (ILVV…ITVI), 219 to 239 (FGGF…YIGF), 259 to 279 (GIIG…LVLV), 309 to 329 (VVTA…VLAG), 359 to 379 (VWTL…AFLA), 380 to 400 (QLIS…IYSL), 416 to 436 (PFYP…FWGL), and 438 to 458 (VQAK…YFAY).

The protein belongs to the amino acid-polyamine-organocation (APC) superfamily.

Its subcellular location is the cell membrane. Its function is as follows. Branched-chain amino acid transport system that specifically transports branched-chain amino acids (BCAAs) (isoleucine, leucine and valine) and, to a lesser extent, methionine. Important for CodY-mediated regulation, and required for optimal growth in media containing free amino acids as the only amino acid source. The chain is Branched-chain amino acid permease BcaP from Lactococcus lactis subsp. cremoris (strain MG1363).